Here is a 396-residue protein sequence, read N- to C-terminus: Phosphopentomutase (396 aa).

Mn(2+) contacts are provided by D14, D286, H291, D327, H328, and H339.

It belongs to the phosphopentomutase family. Mn(2+) serves as cofactor.

The protein localises to the cytoplasm. The enzyme catalyses 2-deoxy-alpha-D-ribose 1-phosphate = 2-deoxy-D-ribose 5-phosphate. It catalyses the reaction alpha-D-ribose 1-phosphate = D-ribose 5-phosphate. The protein operates within carbohydrate degradation; 2-deoxy-D-ribose 1-phosphate degradation; D-glyceraldehyde 3-phosphate and acetaldehyde from 2-deoxy-alpha-D-ribose 1-phosphate: step 1/2. Isomerase that catalyzes the conversion of deoxy-ribose 1-phosphate (dRib-1-P) and ribose 1-phosphate (Rib-1-P) to deoxy-ribose 5-phosphate (dRib-5-P) and ribose 5-phosphate (Rib-5-P), respectively. This chain is Phosphopentomutase, found in Staphylococcus carnosus (strain TM300).